The following is a 119-amino-acid chain: Methylglyoxal synthase (119 aa).

In terms of domain architecture, MGS-like spans 1–119; sequence MKIALIAHDK…KTAELIIKQF (119 aa). Substrate contacts are provided by residues His8, Lys12, 34 to 37, and 54 to 55; these read TGTT and SG. Asp60 (proton donor/acceptor) is an active-site residue. His87 lines the substrate pocket.

Belongs to the methylglyoxal synthase family.

It carries out the reaction dihydroxyacetone phosphate = methylglyoxal + phosphate. Catalyzes the formation of methylglyoxal from dihydroxyacetone phosphate. The sequence is that of Methylglyoxal synthase from Clostridium beijerinckii (strain ATCC 51743 / NCIMB 8052) (Clostridium acetobutylicum).